The sequence spans 188 residues: Glutathione S-transferase 2 (188 aa).

Positions 2-79 (VHYKLMCFDV…FLARQYGYSG (78 aa)) constitute a GST N-terminal domain. Glutathione-binding positions include lysine 43, 49–51 (GQL), and 63–64 (QS). The 108-residue stretch at 81–188 (TPTEEMQVDS…PHLNVFIRKL (108 aa)) folds into the GST C-terminal domain.

This sequence belongs to the GST superfamily. Sigma family.

It carries out the reaction RX + glutathione = an S-substituted glutathione + a halide anion + H(+). Its function is as follows. Conjugation of reduced glutathione to a wide number of exogenous and endogenous hydrophobic electrophiles. The protein is Glutathione S-transferase 2 (gst-2) of Caenorhabditis elegans.